A 376-amino-acid chain; its full sequence is WW domain-binding protein 4 (376 aa).

Residues 11–42 (KFCDYCKCWIADNRPSVEFHERGKNHKENVAK) form a Matrin-type zinc finger. Over residues 94 to 107 (ITPVTSTIPPTSTS) the composition is skewed to low complexity. Disordered regions lie at residues 94–128 (ITPV…KGRW), 189–335 (SRWE…EPKV), and 356–376 (FKKR…GDDQ). 2 consecutive WW domains span residues 122–155 (DPSK…KPEG) and 163–196 (TAVK…KPDD). Over residues 189-198 (SRWEKPDDFI) the composition is skewed to basic and acidic residues. Positions 203-215 (DLPSSKVNENSLG) are enriched in polar residues. Composition is skewed to basic and acidic residues over residues 218–229 (DESKSSDSHSDS) and 243–257 (ETEK…KNKN). Residues S220, S227, and S229 each carry the phosphoserine modification. Position 262 is a phosphoserine (S262). Positions 298 to 309 (QEIKQEVESHEE) are enriched in basic and acidic residues. Over residues 316 to 326 (STENEYVSTSE) the composition is skewed to polar residues. The interval 357–375 (KKRRTENGKSRNLRQRGDD) is interaction with SNRNP200. Residues 361–376 (TENGKSRNLRQRGDDQ) are compositionally biased toward basic and acidic residues.

Component of the spliceosome B complex. Associated with U2 snRNPs. Binds splicing factors SNRPB, SNRPC and SF1. Interacts via the WW domains with the Pro-rich domains of KHDRBS1/SAM68. Interacts via the WW domains with the Pro-rich domains of WBP11. Interacts with SNRNP200.

The protein resides in the nucleus. It localises to the nucleus speckle. Functionally, involved in pre-mRNA splicing as a component of the spliceosome. May play a role in cross-intron bridging of U1 and U2 snRNPs in the mammalian A complex. This chain is WW domain-binding protein 4 (WBP4), found in Homo sapiens (Human).